A 448-amino-acid polypeptide reads, in one-letter code: Exodeoxyribonuclease 7 large subunit (448 aa).

It belongs to the XseA family. As to quaternary structure, heterooligomer composed of large and small subunits.

Its subcellular location is the cytoplasm. It carries out the reaction Exonucleolytic cleavage in either 5'- to 3'- or 3'- to 5'-direction to yield nucleoside 5'-phosphates.. In terms of biological role, bidirectionally degrades single-stranded DNA into large acid-insoluble oligonucleotides, which are then degraded further into small acid-soluble oligonucleotides. This chain is Exodeoxyribonuclease 7 large subunit, found in Hamiltonella defensa subsp. Acyrthosiphon pisum (strain 5AT).